The primary structure comprises 583 residues: NEDD4-binding protein 2-like 2 (583 aa).

The stretch at 162-197 forms a coiled coil; it reads NSEKSEIDNELFQFYKEIEELEKEKDGFENSCKESE. The interval 549-575 is disordered; that stretch reads EPSHKSTQRPPPPQGRQRWGGSLGSHN.

The chain is NEDD4-binding protein 2-like 2 (N4BP2L2) from Homo sapiens (Human).